We begin with the raw amino-acid sequence, 502 residues long: Cytochrome P450 71A1 (502 aa).

A helical membrane pass occupies residues 7 to 21 (LLFLAIALTFFLLKL). Cys443 lines the heme pocket.

This sequence belongs to the cytochrome P450 family. Heme is required as a cofactor. As to expression, mesocarp.

The protein localises to the microsome membrane. The protein resides in the endoplasmic reticulum membrane. Involved in the metabolism of compounds associated with the development of flavor in the ripening fruit process, possibly by acting as trans-cinnamic acid 4-hydrolase. In Persea americana (Avocado), this protein is Cytochrome P450 71A1 (CYP71A1).